The primary structure comprises 67 residues: DNA gyrase inhibitor YacG (67 aa).

Zn(2+) is bound by residues cysteine 10, cysteine 13, cysteine 29, and cysteine 33.

Belongs to the DNA gyrase inhibitor YacG family. Interacts with GyrB. The cofactor is Zn(2+).

Its function is as follows. Inhibits all the catalytic activities of DNA gyrase by preventing its interaction with DNA. Acts by binding directly to the C-terminal domain of GyrB, which probably disrupts DNA binding by the gyrase. This Pasteurella multocida (strain Pm70) protein is DNA gyrase inhibitor YacG.